Reading from the N-terminus, the 706-residue chain is Kinesin-like protein KIF2A (706 aa).

Residues 1–217 form a globular region; it reads MATANFGKIQ…LDYRPLTTAD (217 aa). Residues 66 to 139 are disordered; the sequence is LVPDEEIEPS…AQQNGSVSDI (74 aa). Ser-75 is modified (phosphoserine). Phosphothreonine occurs at positions 78 and 97. At Ser-100 the chain carries Phosphoserine. The residue at position 102 (Lys-102) is an N6-acetyllysine. The span at 123-139 shows a compositional bias: polar residues; it reads FPEQSSSAQQNGSVSDI. Residues Ser-135 and Ser-140 each carry the phosphoserine modification. The interval 165 to 186 is disordered; it reads KLQEKREKRRLQQQELREKRAQ. A Kinesin motor domain is found at 223–553; sequence RICVCVRKRP…LRYANRVKEL (331 aa). 313 to 320 contributes to the ATP binding site; it reads GQTGSGKT. A phosphoserine mark is found at Asp-556 and Gln-573. The stretch at 660–699 forms a coiled coil; that stretch reads ATQLEAILEQKIDILTELRDKVKSFRAALQEEEQASKQIN.

It belongs to the TRAFAC class myosin-kinesin ATPase superfamily. Kinesin family. MCAK/KIF2 subfamily. In terms of assembly, interacts with AURKA and PLK1. Interacts with PSRC1. Interacts with MCRS1; the interaction enhances recruitment of KIF2A to the minus ends of spindle microtubules which promotes chromosome alignment.

It localises to the cytoplasm. The protein localises to the cytoskeleton. The protein resides in the microtubule organizing center. It is found in the centrosome. Its subcellular location is the spindle pole. It localises to the spindle. In terms of biological role, plus end-directed microtubule-dependent motor required for normal brain development. May regulate microtubule dynamics during axonal growth. Required for normal progression through mitosis. Required for normal congress of chromosomes at the metaphase plate. Required for normal spindle dynamics during mitosis. Promotes spindle turnover. Implicated in formation of bipolar mitotic spindles. Has microtubule depolymerization activity. This chain is Kinesin-like protein KIF2A (KIF2A), found in Homo sapiens (Human).